A 161-amino-acid chain; its full sequence is Protein-export protein SecB (161 aa).

Belongs to the SecB family. In terms of assembly, homotetramer, a dimer of dimers. One homotetramer interacts with 1 SecA dimer.

The protein localises to the cytoplasm. Its function is as follows. One of the proteins required for the normal export of preproteins out of the cell cytoplasm. It is a molecular chaperone that binds to a subset of precursor proteins, maintaining them in a translocation-competent state. It also specifically binds to its receptor SecA. This Afipia carboxidovorans (strain ATCC 49405 / DSM 1227 / KCTC 32145 / OM5) (Oligotropha carboxidovorans) protein is Protein-export protein SecB.